Here is an 833-residue protein sequence, read N- to C-terminus: Protein PAT1 homolog 1 (833 aa).

3 disordered regions span residues 279–313 (DMREDNKFSHPPPGFNQNVQPRMDPSLSPGGMHGM), 398–427 (NIRQNGPQFSHPSGPHSPGNRVQRKHSGMP), and 492–549 (EEAT…DKKL). The segment covering 303 to 313 (PSLSPGGMHGM) has biased composition (low complexity). Over residues 398–408 (NIRQNGPQFSH) the composition is skewed to polar residues.

This sequence belongs to the PAT1 family.

The protein resides in the cytoplasm. It is found in the P-body. Its function is as follows. RNA-binding protein involved in deadenylation-dependent decapping of mRNAs, leading to the degradation of mRNAs. Acts as a scaffold protein that connects deadenylation and decapping machinery. Required for the recruitment of P-body components such as cgh-1 in somatic blastomeres. May play a role in recruiting the decapping enzyme dcap-1 to cytoplasmic puncta in the cell body of the posterior touch receptor neuron, PLM. The polypeptide is Protein PAT1 homolog 1 (Caenorhabditis elegans).